Reading from the N-terminus, the 263-residue chain is MEDETELCFRSNKVTRLEMFVCTYGGKISSLACSHMELIKRLQIAEPVKALNCNFGHQCLPGYESLIKTPKKNKNMLRRPRKTEGDGTCFNSAIEASILFKDKMYKLKCFPSTGEIQVPGVIFPDFEDGKNIIQQWVEFLQHQPIEKKVQIIEFKTIMINFKFQINPVSPRVIIHLKKFAALLEQIPTPYPIREIKPPLEDSKVSAKFMVSPGKKVRINVFLKGKINILGCNTKESAETIYTFLKDLISVHWQEILCVLPVPD.

It belongs to the asfivirus B263R family.

In terms of biological role, putative TATA-binding protein. In African swine fever virus (isolate Tick/Malawi/Lil 20-1/1983) (ASFV), this protein is Putative TATA-binding protein pB263R.